Here is a 272-residue protein sequence, read N- to C-terminus: Shikimate dehydrogenase (NADP(+)) (272 aa).

Shikimate-binding positions include 14–16 (SKS) and Thr-61. Lys-65 acts as the Proton acceptor in catalysis. Glu-77 contacts NADP(+). Shikimate is bound by residues Asn-86 and Asp-102. NADP(+) contacts are provided by residues 126 to 130 (GAGGA), 149 to 154 (NRTASR), and Met-213. Tyr-215 contacts shikimate. Gly-237 provides a ligand contact to NADP(+).

It belongs to the shikimate dehydrogenase family. In terms of assembly, homodimer.

It catalyses the reaction shikimate + NADP(+) = 3-dehydroshikimate + NADPH + H(+). Its pathway is metabolic intermediate biosynthesis; chorismate biosynthesis; chorismate from D-erythrose 4-phosphate and phosphoenolpyruvate: step 4/7. Functionally, involved in the biosynthesis of the chorismate, which leads to the biosynthesis of aromatic amino acids. Catalyzes the reversible NADPH linked reduction of 3-dehydroshikimate (DHSA) to yield shikimate (SA). The chain is Shikimate dehydrogenase (NADP(+)) from Salmonella typhimurium (strain LT2 / SGSC1412 / ATCC 700720).